We begin with the raw amino-acid sequence, 280 residues long: Cytochrome c1 (280 aa).

The N-terminal stretch at 1 to 21 (MKKLLISAVSALVLGSGAALA) is a signal peptide. Positions 55, 58, 59, and 205 each coordinate heme c. The chain crosses the membrane as a helical span at residues 249 to 267 (MGLVAVVMLGLLSVMLYLT).

As to quaternary structure, the main subunits of complex b-c1 are: cytochrome b, cytochrome c1 and the Rieske protein. In terms of processing, binds 1 heme c group covalently per subunit.

Its subcellular location is the cell membrane. In terms of biological role, component of the ubiquinol-cytochrome c reductase complex (complex III or cytochrome b-c1 complex), which is a respiratory chain that generates an electrochemical potential coupled to ATP synthesis. c1 functions as an electron donor to cytochrome c. This chain is Cytochrome c1 (petC), found in Rhodobacter capsulatus (Rhodopseudomonas capsulata).